We begin with the raw amino-acid sequence, 162 residues long: Balbiani ring protein 2 (162 aa).

The interval 1 to 31 (CDDAMRKTESDKCTNIGGKFDPSTCKCTPET) is last constant region. The interval 32-51 (VTEGPTTCLESSESDEVTTK) is last Cys-1 repeat. The unique region stretch occupies residues 52–162 (KPCDCTCAPD…VKGLEDILNS (111 aa)).

In terms of tissue distribution, salivary gland.

It is found in the secreted. Its function is as follows. Used by the larvae to construct a supramolecular structure, the larval tube. The protein is Balbiani ring protein 2 (BR2) of Chironomus pallidivittatus (Midge).